The sequence spans 558 residues: 2-isopropylmalate synthase (558 aa).

Residues 30 to 303 (PIWCSVDLRD…DPGIDCSDIN (274 aa)) enclose the Pyruvate carboxyltransferase domain. The Mg(2+) site is built by Asp39, His242, His244, and Asn278. Residues 437–558 (QPGARLKFLD…ANRIVGRKAR (122 aa)) are regulatory domain.

The protein belongs to the alpha-IPM synthase/homocitrate synthase family. LeuA type 2 subfamily. In terms of assembly, homodimer. The cofactor is Mg(2+).

Its subcellular location is the cytoplasm. The catalysed reaction is 3-methyl-2-oxobutanoate + acetyl-CoA + H2O = (2S)-2-isopropylmalate + CoA + H(+). Its pathway is amino-acid biosynthesis; L-leucine biosynthesis; L-leucine from 3-methyl-2-oxobutanoate: step 1/4. Functionally, catalyzes the condensation of the acetyl group of acetyl-CoA with 3-methyl-2-oxobutanoate (2-ketoisovalerate) to form 3-carboxy-3-hydroxy-4-methylpentanoate (2-isopropylmalate). The protein is 2-isopropylmalate synthase of Mesorhizobium japonicum (strain LMG 29417 / CECT 9101 / MAFF 303099) (Mesorhizobium loti (strain MAFF 303099)).